Here is a 79-residue protein sequence, read N- to C-terminus: MORN repeat-containing protein 2 (79 aa).

MORN repeat units lie at residues 15 to 37 (YEGH…NGAK) and 38 to 60 (YTGN…QGLE).

In Bos taurus (Bovine), this protein is MORN repeat-containing protein 2 (MORN2).